The sequence spans 232 residues: Ubiquinone biosynthesis O-methyltransferase (232 aa).

The S-adenosyl-L-methionine site is built by Arg36, Gly55, Asp76, and Met120.

This sequence belongs to the methyltransferase superfamily. UbiG/COQ3 family.

The catalysed reaction is a 3-demethylubiquinol + S-adenosyl-L-methionine = a ubiquinol + S-adenosyl-L-homocysteine + H(+). It catalyses the reaction a 3-(all-trans-polyprenyl)benzene-1,2-diol + S-adenosyl-L-methionine = a 2-methoxy-6-(all-trans-polyprenyl)phenol + S-adenosyl-L-homocysteine + H(+). It participates in cofactor biosynthesis; ubiquinone biosynthesis. In terms of biological role, O-methyltransferase that catalyzes the 2 O-methylation steps in the ubiquinone biosynthetic pathway. This chain is Ubiquinone biosynthesis O-methyltransferase, found in Burkholderia multivorans (strain ATCC 17616 / 249).